Reading from the N-terminus, the 911-residue chain is DNA ligase 4 (911 aa).

ATP is bound by residues Glu271, Thr272, Lys273, Leu274, Arg278, Glu331, Lys345, Phe367, Glu427, Lys432, Lys449, and Lys451. Lys273 functions as the N6-AMP-lysine intermediate in the catalytic mechanism. Residue Glu331 participates in Mg(2+) binding. A Mg(2+)-binding site is contributed by Glu427. Residues 610 to 620 (LASKHFYVGGD) form a required for catalytic activity region. 2 BRCT domains span residues 654–743 (KISN…PHFM) and 808–911 (SPLS…QYLI).

It belongs to the ATP-dependent DNA ligase family. In terms of assembly, interacts with XRCC4; the LIG4-XRCC4 subcomplex has a 1:2 stoichiometry and XRCC4 is required for LIG4 stability. Component of the core long-range non-homologous end joining (NHEJ) complex (also named DNA-PK complex) composed of PRKDC, LIG4, XRCC4, XRCC6/Ku70, XRCC5/Ku86 and NHEJ1/XLF. Additional component of the NHEJ complex includes PAXX. Following autophosphorylation, PRKDC dissociates from DNA, leading to formation of the short-range NHEJ complex, composed of LIG4, XRCC4, XRCC6/Ku70, XRCC5/Ku86 and NHEJ1/XLF. Interacts with DCLRE1C; the interaction is direct. Interacts with APLF. Requires Mg(2+) as cofactor.

It is found in the nucleus. It carries out the reaction ATP + (deoxyribonucleotide)n-3'-hydroxyl + 5'-phospho-(deoxyribonucleotide)m = (deoxyribonucleotide)n+m + AMP + diphosphate.. Functionally, DNA ligase involved in DNA non-homologous end joining (NHEJ); required for double-strand break (DSB) repair and V(D)J recombination. Catalyzes the NHEJ ligation step of the broken DNA during DSB repair by resealing the DNA breaks after the gap filling is completed. Joins single-strand breaks in a double-stranded polydeoxynucleotide in an ATP-dependent reaction. LIG4 is mechanistically flexible: it can ligate nicks as well as compatible DNA overhangs alone, while in the presence of XRCC4, it can ligate ends with 2-nucleotides (nt) microhomology and 1-nt gaps. Forms a subcomplex with XRCC4; the LIG4-XRCC4 subcomplex is responsible for the NHEJ ligation step and XRCC4 enhances the joining activity of LIG4. Binding of the LIG4-XRCC4 complex to DNA ends is dependent on the assembly of the DNA-dependent protein kinase complex DNA-PK to these DNA ends. LIG4 regulates nuclear localization of XRCC4. This chain is DNA ligase 4, found in Pongo abelii (Sumatran orangutan).